The sequence spans 279 residues: Putative biopolymer transport protein ExbB homolog (279 aa).

3 helical membrane-spanning segments follow: residues 19 to 39, 126 to 146, and 162 to 182; these read SGGVITYLIAAIGIYGFITAL, IIEVAPMLGLIGTVIGIWYTF, and IYVALITTILGLAVAIILMPL.

The protein belongs to the ExbB/TolQ family.

It localises to the cell membrane. The sequence is that of Putative biopolymer transport protein ExbB homolog from Methanothermobacter thermautotrophicus (strain ATCC 29096 / DSM 1053 / JCM 10044 / NBRC 100330 / Delta H) (Methanobacterium thermoautotrophicum).